The chain runs to 201 residues: Large ribosomal subunit protein uL4 (201 aa).

Residues 44–71 form a disordered region; that stretch reads RAQKTRAEVSGSGKKPWRQKGTGRARSG.

It belongs to the universal ribosomal protein uL4 family. Part of the 50S ribosomal subunit.

In terms of biological role, one of the primary rRNA binding proteins, this protein initially binds near the 5'-end of the 23S rRNA. It is important during the early stages of 50S assembly. It makes multiple contacts with different domains of the 23S rRNA in the assembled 50S subunit and ribosome. Its function is as follows. Forms part of the polypeptide exit tunnel. The chain is Large ribosomal subunit protein uL4 from Actinobacillus succinogenes (strain ATCC 55618 / DSM 22257 / CCUG 43843 / 130Z).